The primary structure comprises 216 residues: Probable GTP-binding protein EngB (216 aa).

An EngB-type G domain is found at 26–210; that stretch reads PMATIIFAGR…KNRIFEVIRE (185 aa). Residues 34–41, 59–63, 76–79, 156–159, and 189–191 contribute to the GTP site; these read GRSNVGKS, GVTRK, DMPG, NKLD, and ISA. Residues S41 and T61 each contribute to the Mg(2+) site.

The protein belongs to the TRAFAC class TrmE-Era-EngA-EngB-Septin-like GTPase superfamily. EngB GTPase family. Requires Mg(2+) as cofactor.

Functionally, necessary for normal cell division and for the maintenance of normal septation. This is Probable GTP-binding protein EngB from Pyrococcus horikoshii (strain ATCC 700860 / DSM 12428 / JCM 9974 / NBRC 100139 / OT-3).